An 81-amino-acid polypeptide reads, in one-letter code: Cytotoxin I-like T-15 (81 aa).

The first 21 residues, 1–21, serve as a signal peptide directing secretion; it reads MKTLLLTLVVVTIVCLDLGYT. 4 disulfide bridges follow: Cys-24–Cys-42, Cys-35–Cys-59, Cys-63–Cys-74, and Cys-75–Cys-80.

The protein belongs to the three-finger toxin family. Short-chain subfamily. Type IA cytotoxin sub-subfamily. In terms of assembly, monomer in solution; Homodimer and oligomer in the presence of negatively charged lipids forming a pore with a size ranging between 20 and 30 Angstroms. Expressed by the venom gland.

Its subcellular location is the secreted. It localises to the target cell membrane. Its function is as follows. Shows cytolytic activity on many different cells by forming pore in lipid membranes. In vivo, increases heart rate or kills the animal by cardiac arrest. In addition, it binds to heparin with high affinity, interacts with Kv channel-interacting protein 1 (KCNIP1) in a calcium-independent manner, and binds to integrin alpha-V/beta-3 (ITGAV/ITGB3) with moderate affinity. The chain is Cytotoxin I-like T-15 from Naja atra (Chinese cobra).